The sequence spans 436 residues: Cyclin-A2-2 (436 aa).

Belongs to the cyclin family. Cyclin AB subfamily. As to expression, expressed in roots, stems, leaves, flowers and siliques.

This Arabidopsis thaliana (Mouse-ear cress) protein is Cyclin-A2-2 (CYCA2-2).